The primary structure comprises 374 residues: uncharacterized protein (374 aa).

Residues 39–66 are a coiled coil; that stretch reads RDVRKHLESRDAKQELIDSLEEAVRDSR.

This is an uncharacterized protein from Mycobacterium tuberculosis (strain CDC 1551 / Oshkosh).